The sequence spans 379 residues: Lipoyl synthase, mitochondrial (379 aa).

Cys106, Cys111, Cys117, Cys137, Cys141, Cys144, and Ser352 together coordinate [4Fe-4S] cluster. Residues 122-341 (EHGTQTATIM…EERGNALGFL (220 aa)) enclose the Radical SAM core domain.

The protein belongs to the radical SAM superfamily. Lipoyl synthase family. It depends on [4Fe-4S] cluster as a cofactor.

It is found in the mitochondrion. It catalyses the reaction [[Fe-S] cluster scaffold protein carrying a second [4Fe-4S](2+) cluster] + N(6)-octanoyl-L-lysyl-[protein] + 2 oxidized [2Fe-2S]-[ferredoxin] + 2 S-adenosyl-L-methionine + 4 H(+) = [[Fe-S] cluster scaffold protein] + N(6)-[(R)-dihydrolipoyl]-L-lysyl-[protein] + 4 Fe(3+) + 2 hydrogen sulfide + 2 5'-deoxyadenosine + 2 L-methionine + 2 reduced [2Fe-2S]-[ferredoxin]. It participates in protein modification; protein lipoylation via endogenous pathway; protein N(6)-(lipoyl)lysine from octanoyl-[acyl-carrier-protein]: step 2/2. Catalyzes the radical-mediated insertion of two sulfur atoms into the C-6 and C-8 positions of the octanoyl moiety bound to the lipoyl domains of lipoate-dependent enzymes, thereby converting the octanoylated domains into lipoylated derivatives. This is Lipoyl synthase, mitochondrial from Drosophila erecta (Fruit fly).